We begin with the raw amino-acid sequence, 1079 residues long: Psi-producing oxygenase A (1079 aa).

Residues 105–446 (TNTFLTTLWN…DGSYDDNDLV (342 aa)) are linoleate 8R-lipoxygenase. H202 contributes to the heme b binding site. Residue Y374 is part of the active site. Position 377 (H377) interacts with heme b. The segment at 654 to 1079 (QFINSHSACM…WDGDLPEVKE (426 aa)) is 9,12-octadecadienoate 8-hydroperoxide 8R-isomerase.

It belongs to the peroxidase family. In terms of assembly, homotetramer. Requires heme b as cofactor.

The catalysed reaction is (9Z,12Z)-octadecadienoate + O2 = (8R,9Z,12Z)-8-hydroperoxyoctadeca-9,12-dienoate. The enzyme catalyses (8R,9Z,12Z)-8-hydroperoxyoctadeca-9,12-dienoate = (5S,8R,9Z,12Z)-5,8-dihydroxyoctadeca-9,12-dienoate. Its function is as follows. Bifunctional heme-containing enzyme that oxidizes linoleic acid to (8R,9Z,12Z)-8-hydroperoxyoctadeca-9,12-dienoate (within the N-terminal heme peroxidase domain), which is subsequently isomerized to (5S,8R,9Z,12Z)-5,8-dihydroxyoctadeca-9,12-dienoate (within the C-terminal P450 heme thiolate domain). Oxidized unsaturated fatty acids, so-called oxylipins, derived from endogenous fatty acids, influence the development of the asexual conidiophores and sexual cleistothecia and regulate the secondary metabolism. These substances were collectively named psi factors and are primarily a mixture of hydroxylated oleic, linoleic and alpha-linolenic acids. They are termed psi-beta, psi-alpha, and psi-gamma, respectively. Oxylipins may also serve as activators of mammalian immune responses contributing to enhanced resistance to opportunistic fungi and as factors that modulate fungal development contributing to resistance to host defenses. The sequence is that of Psi-producing oxygenase A (ppoA) from Aspergillus fumigatus (strain CBS 144.89 / FGSC A1163 / CEA10) (Neosartorya fumigata).